Here is a 551-residue protein sequence, read N- to C-terminus: Cytochrome c oxidase subunit 1 homolog (551 aa).

Helical transmembrane passes span 14–34 (GELG…VVAA), 40–60 (EYAF…FVIG), and 88–108 (VGTL…VIIA). His-132 serves as a coordination point for heme b. A run of 8 helical transmembrane segments spans residues 133 to 153 (TSAV…FYVV), 169 to 189 (FVVL…LLGI), 202 to 222 (ADLW…GTVL), 229 to 249 (IYVA…LHLG), 280 to 300 (GHNA…YYFI), 313 to 333 (LSIV…PHHL), 345 to 365 (LGMT…INGL), and 383 to 403 (MMVV…MMSV). Cu cation contacts are provided by His-281, His-331, and His-332. Heme b is bound by residues His-419 and His-421. The next 3 helical transmembrane spans lie at 424–444 (ALGW…PWLW), 459–479 (FWVS…AGIL), and 513–533 (IGGI…FMTI).

This sequence belongs to the heme-copper respiratory oxidase family. Requires Cu(2+) as cofactor. It depends on heme b as a cofactor.

It is found in the cell membrane. It catalyses the reaction 4 Fe(II)-[cytochrome c] + O2 + 8 H(+)(in) = 4 Fe(III)-[cytochrome c] + 2 H2O + 4 H(+)(out). It participates in energy metabolism; oxidative phosphorylation. Cytochrome c oxidase is the component of the respiratory chain that catalyzes the reduction of oxygen to water. Subunits 1-3 form the functional core of the enzyme complex. Co I is the catalytic subunit of the enzyme. Electrons originating in cytochrome c or a quinol are transferred to the bimetallic center formed by a high-spin heme and copper B. This is Cytochrome c oxidase subunit 1 homolog (fixN) from Azorhizobium caulinodans (strain ATCC 43989 / DSM 5975 / JCM 20966 / LMG 6465 / NBRC 14845 / NCIMB 13405 / ORS 571).